The primary structure comprises 409 residues: Serine/threonine transporter SstT (409 aa).

Helical transmembrane passes span 24-44 (LALGIVIGSVSPQLGLAAGLF), 48-68 (FVGALKAVAPVLVFILVAATI), 82-102 (IIVLYLIGTFSAALTAVIAGM), 142-162 (AIANANYIGILAWALVLGAAL), 194-214 (LGIFGLVSSTIAETGFGALAG), 218-238 (LLAVLLGCMAFIALAVNPAIV), 292-312 (IPLGATINMAGAAITITVLAM), and 319-339 (GITVDFATALLLSLVATVSAC).

This sequence belongs to the dicarboxylate/amino acid:cation symporter (DAACS) (TC 2.A.23) family.

Its subcellular location is the cell inner membrane. The enzyme catalyses L-serine(in) + Na(+)(in) = L-serine(out) + Na(+)(out). It catalyses the reaction L-threonine(in) + Na(+)(in) = L-threonine(out) + Na(+)(out). In terms of biological role, involved in the import of serine and threonine into the cell, with the concomitant import of sodium (symport system). The chain is Serine/threonine transporter SstT from Neisseria meningitidis serogroup B (strain ATCC BAA-335 / MC58).